The following is a 1523-amino-acid chain: Slit homolog 3 protein (1523 aa).

An N-terminal signal peptide occupies residues 1-33 (MAPGRTGAGAAVRARLALALALASILSGPPAAA). Positions 34–61 (CPTKCTCSAASVDCHGLGLRAVPRGIPR) constitute an LRRNT domain. LRR repeat units follow at residues 62–83 (NAER…DFTG), 86–107 (NLRV…AFQD), 110–131 (QLER…LFQS), 134–155 (KLTR…AFRG), 158–179 (GVKN…AFRA), and 182–203 (DLEI…SFNH). N-linked (GlcNAc...) asparagine glycosylation is present at Asn-72. An N-linked (GlcNAc...) asparagine glycan is attached at Asn-192. Positions 215–265 (NHLYCDCHLAWLSDWLRQRRTIGQFTLCMAPVHLRGFSVADVQKKEYVCPG) constitute an LRRCT 1 domain. An LRRNT 2 domain is found at 271–307 (PACNANSLSCPSACSCSNNIVDCRGKGLTEIPANLPE). A disulfide bridge links Cys-284 with Cys-293. LRR repeat units follow at residues 308-329 (GIVE…AFIQ), 332-353 (KLKR…AFQG), 356-377 (SLTS…LFDG), 380-401 (SLQL…TFQD), and 404-425 (NLNL…LFAP). Residues 437–487 (NPFVCDCHLKWLADYLQDNPIETSGARCSSPRRLANKRISQIKSKKFRCSG) form the LRRCT 2 domain. 4 disulfides stabilise this stretch: Cys-441-Cys-464, Cys-443-Cys-485, Cys-505-Cys-511, and Cys-509-Cys-518. The LRRNT 3 domain occupies 496–532 (SSECFMDLVCPEKCRCEGTIVDCSNQKLSRIPSHLPE). LRR repeat units lie at residues 533–554 (YTTD…GIFK), 558–579 (NLRK…AFDG), 582–603 (GVQE…MFRG), 606–627 (GLKT…TFAG), and 630–651 (SVRL…AFTT). An N-linked (GlcNAc...) asparagine glycan is attached at Asn-563. A glycan (N-linked (GlcNAc...) asparagine) is linked at Asn-622. The LRRCT 3 domain maps to 663–713 (NPFNCNCHMAWLGRWLRKRRIVSGNPRCQKPFFLKEIPIQDVAIQDFTCEG). 2 cysteine pairs are disulfide-bonded: Cys-667–Cys-690 and Cys-669–Cys-711. The region spanning 716 to 752 (ENSCQLSPRCPEQCTCVETVVRCSNRGLHTLPKGMPK) is the LRRNT 4 domain. LRR repeat units follow at residues 753–774 (DVTE…LSTF), 776–797 (QLTL…TFSN), 800–821 (HLST…AFNG), and 824–845 (SLRV…SFND). Residues Asn-784, Asn-792, and Asn-797 are each glycosylated (N-linked (GlcNAc...) asparagine). The LRRCT 4 domain maps to 857–907 (NPLHCDCSLRWLSEWIKAGYKEPGIARCSSPESMADRLLLTTPTHRFQCKG). EGF-like domains follow at residues 918-953 (NACL…KDCT), 955-994 (PINT…QRCE), 996-1032 (NPDD…ELCD), 1034-1072 (VIDY…KLCE), 1074-1110 (DNDD…LFCE), and 1119-1155 (QTSP…PRCE). Cystine bridges form between Cys-920/Cys-931, Cys-925/Cys-941, Cys-943/Cys-952, Cys-959/Cys-970, Cys-964/Cys-982, Cys-984/Cys-993, Cys-1000/Cys-1011, Cys-1005/Cys-1020, Cys-1022/Cys-1031, Cys-1038/Cys-1051, Cys-1045/Cys-1060, Cys-1062/Cys-1071, Cys-1078/Cys-1089, Cys-1083/Cys-1098, Cys-1100/Cys-1109, Cys-1123/Cys-1134, Cys-1128/Cys-1143, and Cys-1145/Cys-1154. Asn-928 carries an N-linked (GlcNAc...) asparagine glycan. N-linked (GlcNAc...) asparagine glycosylation is present at Asn-1025. One can recognise a Laminin G-like domain in the interval 1158–1332 (ITVNFVGKDS…PQSLGVSPGC (175 aa)). Asn-1181 and Asn-1247 each carry an N-linked (GlcNAc...) asparagine glycan. Intrachain disulfides connect Cys-1305–Cys-1332, Cys-1355–Cys-1364, Cys-1372–Cys-1382, Cys-1377–Cys-1391, and Cys-1393–Cys-1402. 2 consecutive EGF-like domains span residues 1340–1365 (HGLC…PLCD) and 1368–1403 (AQDP…PLCD). Asn-1406 is a glycosylation site (N-linked (GlcNAc...) asparagine). Residues 1408–1444 (SANACSAFKCHHGQCHISDRGEPYCLCQPGFSGNHCE) form the EGF-like 9 domain. 7 disulfide bridges follow: Cys-1412-Cys-1422, Cys-1417-Cys-1432, Cys-1434-Cys-1443, Cys-1449-Cys-1487, Cys-1467-Cys-1501, Cys-1478-Cys-1517, and Cys-1482-Cys-1519. The CTCK domain maps to 1449 to 1523 (CLGEIVREAI…HLECGCRECS (75 aa)).

The protein resides in the secreted. In terms of biological role, may act as molecular guidance cue in cellular migration, and function may be mediated by interaction with roundabout homolog receptors. The chain is Slit homolog 3 protein (Slit3) from Rattus norvegicus (Rat).